A 293-amino-acid chain; its full sequence is Transcription initiation factor IIB 2 (293 aa).

Residues 1-31 form a TFIIB-type zinc finger; the sequence is MKCPYCKTDNAITYDVEKGMYVCTNCASVIE. Zn(2+) contacts are provided by Cys3, Cys6, Cys23, and Cys26. 2 consecutive repeat copies span residues 107–193 and 204–285.

It belongs to the TFIIB family.

In terms of biological role, stabilizes TBP binding to an archaeal box-A promoter. Also responsible for recruiting RNA polymerase II to the pre-initiation complex (DNA-TBP-TFIIB). This is Transcription initiation factor IIB 2 from Saccharolobus solfataricus (strain ATCC 35092 / DSM 1617 / JCM 11322 / P2) (Sulfolobus solfataricus).